Reading from the N-terminus, the 139-residue chain is Transcription antitermination protein NusB (139 aa).

The protein belongs to the NusB family.

Involved in transcription antitermination. Required for transcription of ribosomal RNA (rRNA) genes. Binds specifically to the boxA antiterminator sequence of the ribosomal RNA (rrn) operons. This is Transcription antitermination protein NusB from Natranaerobius thermophilus (strain ATCC BAA-1301 / DSM 18059 / JW/NM-WN-LF).